A 189-amino-acid polypeptide reads, in one-letter code: Glycerol-3-phosphate acyltransferase (189 aa).

5 consecutive transmembrane segments (helical) span residues Met-1–Leu-21, Lys-50–Ala-70, Trp-72–Leu-92, Met-111–Phe-131, and Leu-151–Val-171.

This sequence belongs to the PlsY family. In terms of assembly, probably interacts with PlsX.

It is found in the cell inner membrane. It carries out the reaction an acyl phosphate + sn-glycerol 3-phosphate = a 1-acyl-sn-glycero-3-phosphate + phosphate. It functions in the pathway lipid metabolism; phospholipid metabolism. In terms of biological role, catalyzes the transfer of an acyl group from acyl-phosphate (acyl-PO(4)) to glycerol-3-phosphate (G3P) to form lysophosphatidic acid (LPA). This enzyme utilizes acyl-phosphate as fatty acyl donor, but not acyl-CoA or acyl-ACP. The polypeptide is Glycerol-3-phosphate acyltransferase (Pseudomonas aeruginosa (strain LESB58)).